The chain runs to 423 residues: Methionine aminopeptidase 2 (423 aa).

The span at 1 to 17 (MTDVIDAKPEEAKKVPP) shows a compositional bias: basic and acidic residues. A disordered region spans residues 1–89 (MTDVIDAKPE…IQPYKDDNAY (89 aa)). The segment covering 18–29 (EVEDEDSGDESA) has biased composition (acidic residues). Positions 41 to 54 (KKKKKKKKPKKKKK) are enriched in basic residues. Histidine 176 lines the substrate pocket. A divalent metal cation contacts are provided by aspartate 196, aspartate 207, and histidine 276. A substrate-binding site is contributed by histidine 284. A divalent metal cation is bound by residues glutamate 309 and glutamate 404.

This sequence belongs to the peptidase M24A family. Methionine aminopeptidase eukaryotic type 2 subfamily. Co(2+) is required as a cofactor. Zn(2+) serves as cofactor. It depends on Mn(2+) as a cofactor. The cofactor is Fe(2+).

It is found in the cytoplasm. It carries out the reaction Release of N-terminal amino acids, preferentially methionine, from peptides and arylamides.. Cotranslationally removes the N-terminal methionine from nascent proteins. The N-terminal methionine is often cleaved when the second residue in the primary sequence is small and uncharged (Met-Ala-, Cys, Gly, Pro, Ser, Thr, or Val). This chain is Methionine aminopeptidase 2, found in Schizophyllum commune (strain H4-8 / FGSC 9210) (Split gill fungus).